The primary structure comprises 120 residues: Transmembrane protein 010R (120 aa).

A run of 2 helical transmembrane segments spans residues 40–60 (FCGA…ATAT) and 72–92 (SIFF…VWFL).

This sequence belongs to the IIV-6 010R family.

It localises to the membrane. The chain is Transmembrane protein 010R from Invertebrate iridescent virus 6 (IIV-6).